Reading from the N-terminus, the 644-residue chain is MGKIIGIDLGTTNSCVSVLEGDKAKVIENAEGDRTTPSIVAFTDDNEILVGQSAKRQAVTNPRNTLFAVKRLIGRKFTDDVVQKDIKMVPYSIVGADNGDAWVEVKGDKKAPPQISAEVLKKMKKTAEDYLGEKVTEAVITVPAYFNDSQRQATKDAGKIAGLEVKRIINEPTAAALAYGMDKAKGDRTIAVYDLGGGTFDISVIEIADVDGEHQFEVLSTNGDTFLGGEDFDLRLIEYLAEEFKKSNGIDLHNDPLALQRLKEAAEKAKIELSSSQQTEVNLPYITADATGPKHLVVKLTRAKLESLVEELVNRSLEPVKMAIKDADLSVSEIDDVILVGGQTRMPLVQQKVAEFFGKEPRKDVNPDEAVAMGAAIQGAVLSGDVKDVLLLDVTPLTLGIETMGGVATPLIEKNTTIPTKKSQVFSTAEDNQTAVTIHVVQGERKQAAQNKSLGRFDLADIPPAPRGMPQVEVTFDIDANGILNVSAKDKATGKEQSIVIKASSGLSDDEIENMVKDAEANAEADRKFEELVSARNTLEGLVHATKKTLEEAGDKATAEEKSAIEAAITEAEEALKSGDKDAIEAATKKVTDASGSLAQKLYAEQSAQQQGSAGATGGEQPKADKAADDGVVDAEFEEVKDDK.

The residue at position 199 (T199) is a Phosphothreonine; by autocatalysis. The tract at residues 602-644 (LYAEQSAQQQGSAGATGGEQPKADKAADDGVVDAEFEEVKDDK) is disordered. Low complexity predominate over residues 604–614 (AEQSAQQQGSA). Residues 631–644 (GVVDAEFEEVKDDK) are compositionally biased toward acidic residues.

This sequence belongs to the heat shock protein 70 family.

In terms of biological role, acts as a chaperone. The protein is Chaperone protein DnaK of Teredinibacter turnerae (strain ATCC 39867 / T7901).